The following is a 358-amino-acid chain: Photosystem II protein D1 (358 aa).

3 helical membrane-spanning segments follow: residues 28 to 45 (YVGWFGVLMVPTLLAAAI), 117 to 132 (HFLIGICCWLGRQWEL), and 141 to 155 (WICVAYSAPLSAAFA). Chlorophyll a is bound at residue His117. Position 125 (Trp125) interacts with pheophytin a. [CaMn4O5] cluster-binding residues include Asp169 and Glu188. Residues 196–217 (FHMIGVAGMFGGSLFSAMHGSL) traverse the membrane as a helical segment. His197 is a chlorophyll a binding site. Residues His214 and 263–264 (SF) contribute to the a quinone site. His214 contributes to the Fe cation binding site. His271 provides a ligand contact to Fe cation. A helical membrane pass occupies residues 273-287 (FLAAWPVICIWITSL). 4 residues coordinate [CaMn4O5] cluster: His331, Glu332, Asp341, and Ala343. Positions 344-358 (AAESTPVALIAPAIG) are excised as a propeptide.

It belongs to the reaction center PufL/M/PsbA/D family. As to quaternary structure, PSII is composed of 1 copy each of membrane proteins PsbA, PsbB, PsbC, PsbD, PsbE, PsbF, PsbH, PsbI, PsbJ, PsbK, PsbL, PsbM, PsbT, PsbX, PsbY, Psb30/Ycf12, peripheral proteins PsbO, CyanoQ (PsbQ), PsbU, PsbV and a large number of cofactors. It forms dimeric complexes. The D1/D2 heterodimer binds P680, chlorophylls that are the primary electron donor of PSII, and subsequent electron acceptors. It shares a non-heme iron and each subunit binds pheophytin, quinone, additional chlorophylls, carotenoids and lipids. D1 provides most of the ligands for the Mn4-Ca-O5 cluster of the oxygen-evolving complex (OEC). There is also a Cl(-1) ion associated with D1 and D2, which is required for oxygen evolution. The PSII complex binds additional chlorophylls, carotenoids and specific lipids. serves as cofactor. Tyr-160 forms a radical intermediate that is referred to as redox-active TyrZ, YZ or Y-Z. In terms of processing, C-terminally processed by CtpA; processing is essential to allow assembly of the oxygen-evolving complex and thus photosynthetic growth.

It localises to the cellular thylakoid membrane. It catalyses the reaction 2 a plastoquinone + 4 hnu + 2 H2O = 2 a plastoquinol + O2. Photosystem II (PSII) is a light-driven water:plastoquinone oxidoreductase that uses light energy to abstract electrons from H(2)O, generating O(2) and a proton gradient subsequently used for ATP formation. It consists of a core antenna complex that captures photons, and an electron transfer chain that converts photonic excitation into a charge separation. The D1/D2 (PsbA/PsbD) reaction center heterodimer binds P680, the primary electron donor of PSII as well as several subsequent electron acceptors. This chain is Photosystem II protein D1, found in Prochlorococcus marinus (strain MIT 9303).